The following is a 257-amino-acid chain: tRNA (guanine-N(7)-)-methyltransferase (257 aa).

The segment covering 1-12 (MARDSEDQDMET) has biased composition (acidic residues). The interval 1-25 (MARDSEDQDMETETNGAAEGLDPTS) is disordered. Residues G80, 103–104 (EI), 138–139 (NA), and L158 contribute to the S-adenosyl-L-methionine site. D161 is a catalytic residue. Residue 236–238 (SEE) coordinates S-adenosyl-L-methionine.

Belongs to the class I-like SAM-binding methyltransferase superfamily. TrmB family.

The protein localises to the nucleus. The enzyme catalyses guanosine(46) in tRNA + S-adenosyl-L-methionine = N(7)-methylguanosine(46) in tRNA + S-adenosyl-L-homocysteine. The protein operates within tRNA modification; N(7)-methylguanine-tRNA biosynthesis. Its function is as follows. Catalyzes the formation of N(7)-methylguanine at position 46 (m7G46) in tRNA. This Drosophila ananassae (Fruit fly) protein is tRNA (guanine-N(7)-)-methyltransferase.